A 346-amino-acid chain; its full sequence is Phenylalanine--tRNA ligase alpha subunit (346 aa).

Glutamate 262 contacts Mg(2+).

The protein belongs to the class-II aminoacyl-tRNA synthetase family. Phe-tRNA synthetase alpha subunit type 1 subfamily. Tetramer of two alpha and two beta subunits. Requires Mg(2+) as cofactor.

The protein localises to the cytoplasm. It carries out the reaction tRNA(Phe) + L-phenylalanine + ATP = L-phenylalanyl-tRNA(Phe) + AMP + diphosphate + H(+). In Ehrlichia chaffeensis (strain ATCC CRL-10679 / Arkansas), this protein is Phenylalanine--tRNA ligase alpha subunit.